Consider the following 247-residue polypeptide: Probable dihydroorotate dehydrogenase B (NAD(+)), electron transfer subunit (247 aa).

The region spanning 1–87 (MLRRVMIKET…RGPYGNGFKS (87 aa)) is the FAD-binding FR-type domain. 4 residues coordinate [2Fe-2S] cluster: C200, C205, C208, and C216.

It belongs to the PyrK family. In terms of assembly, heterotetramer of 2 PyrK and 2 PyrD type B subunits. [2Fe-2S] cluster serves as cofactor. FAD is required as a cofactor.

The protein operates within pyrimidine metabolism; UMP biosynthesis via de novo pathway; orotate from (S)-dihydroorotate (NAD(+) route): step 1/1. In terms of biological role, responsible for channeling the electrons from the oxidation of dihydroorotate from the FMN redox center in the PyrD type B subunit to the ultimate electron acceptor NAD(+). This Pyrococcus abyssi (strain GE5 / Orsay) protein is Probable dihydroorotate dehydrogenase B (NAD(+)), electron transfer subunit.